We begin with the raw amino-acid sequence, 676 residues long: Polyunsaturated fatty acid lipoxygenase ALOX15B (676 aa).

The PLAT domain occupies 2 to 124 (AEFRVRVSTG…TLVLQEGTAK (123 aa)). Glycine 15, glycine 17, aspartate 39, asparagine 40, glycine 42, glutamate 44, aspartate 85, and alanine 86 together coordinate Ca(2+). Residues 125-676 (VSWADHHPVL…PPLIENSVSI (552 aa)) form the Lipoxygenase domain. 4 residues coordinate Fe cation: histidine 373, histidine 378, histidine 553, and isoleucine 676.

This sequence belongs to the lipoxygenase family. The cofactor is Fe cation. In terms of tissue distribution, expressed in hair, prostate, lung, ovary, lymph node, spinal cord and cornea.

It localises to the nucleus. The protein resides in the cytoplasm. It is found in the cytosol. Its subcellular location is the cell membrane. The protein localises to the cytoskeleton. It localises to the membrane. The protein resides in the cell junction. It is found in the adherens junction. Its subcellular location is the focal adhesion. The catalysed reaction is (5Z,8Z,11Z,14Z)-eicosatetraenoate + O2 = (15S)-hydroperoxy-(5Z,8Z,11Z,13E)-eicosatetraenoate. The enzyme catalyses (9Z,12Z)-octadecadienoate + O2 = 13-hydroperoxy-(9Z,11E)-octadecadienoate. It catalyses the reaction (5S)-hydroxy-(6E,8Z,11Z,14Z)-eicosatetraenoate + O2 = (5S)-hydroxy-(15S)-hydroperoxy-(6E,8Z,11Z,13E)-eicosatetraenoate. It carries out the reaction (5Z,8Z,11Z,14Z)-eicosatetraenoate + O2 = 5-hydroperoxy-(6E,8Z,11Z,14Z)-eicosatetraenoate. The catalysed reaction is (5S,6R)-dihydroxy-(7E,9E,11Z,14Z)-eicosatetraenoate + O2 = (5S,6R)-dihydroxy-(15S)-hydroperoxy-(7E,9E,11Z,13E)-eicosatetraenoate. The enzyme catalyses (5S)-hydroperoxy-(6E,8Z,11Z,14Z)-eicosatetraenoate + O2 = (5S,15S)-dihydroperoxy-(6E,8Z,11Z,13E)-eicosatetraenoate. It catalyses the reaction 2-(5Z,8Z,11Z,14Z-eicosatetraenoyl)-glycerol + O2 = 2-[15(S)-hydroperoxy-(5Z,8Z,11Z,13E)-eicosatetraenoyl]-glycerol. It carries out the reaction (8S)-hydroperoxy-(5Z,9E,11Z,14Z)-eicosatetraenoate + O2 = (8S,15S)-dihydroperoxy-(5Z,9E,11Z,13E)-eicosatetraenoate. The catalysed reaction is N-(5Z,8Z,11Z,14Z)-eicosatetraenoyl-L-alanine + O2 = N-(15S)-hydroperoxy-(5Z,8Z,11Z,13E)-eicosatetraenoyl-alanine. The enzyme catalyses N-(5Z,8Z,11Z,14Z)-eicosatetraenoyl-gamma-aminobutanoate + O2 = N-(15S)-hydroperoxy-(5Z,8Z,11Z,13E)-eicosatetraenoyl-gamma-aminobutanoate. It catalyses the reaction N-(5Z,8Z,11Z,14Z)-eicosatetraenoyl-glycine + O2 = N-(15S)-hydroperoxy-(5Z,8Z,11Z,13E)-eicosatetraenoyl-glycine. It carries out the reaction N-(5Z,8Z,11Z,14Z)-eicosatetraenoyl-taurine + O2 = N-(15S)-hydroperoxy-(5Z,8Z,11Z,13E)-eicosatetraenoyl-taurine. The catalysed reaction is 2-(5Z,8Z,11Z,14Z-eicosatetraenoyl)-glycerol + O2 = 2-[12-hydroperoxy-(5Z,8Z,10E,14Z)-eicosatetraenoyl]-glycerol. The enzyme catalyses 1-octadecanoyl-2-(5Z,8Z,11Z,14Z-eicosatetraenoyl)-sn-glycero-3-phosphocholine + O2 = 1-octadecanoyl-2-(15-hydroperoxy-5Z,8Z,11Z,13E-eicosatetraenoyl)-sn-glycero-3-phosphocholine. It catalyses the reaction a 1-acyl-2-(5Z,8Z,11Z,14Z-eicosatetraenoyl)-sn-glycero-3-phospho-(1D-myo-inositol) + O2 = a 1-acyl-2-(15-hydroperoxy-5Z,8Z,11Z,13E-eicosatetraenoyl)-sn-glycero-3-phospho-(1D-myo-inositol). It carries out the reaction a 1-acyl-2-(8Z,11Z,14Z-eicosatrienoyl)-sn-glycero-3-phospho-(1D-myo-inositol) + O2 = a 1-acyl-2-(15-hydroperoxy-8Z,11Z,13E-eicosatrienoyl)-sn-glycero-3-phospho-(1D-myo-inositol). The catalysed reaction is 1-octadecanoyl-2-(5Z,8Z,11Z,14Z)-eicosatetraenoyl-sn-glycero-3-phosphoethanolamine + O2 = 1-octadecanoyl-2-(15-hydroperoxy-5Z,8Z,11Z,13E-eicosatetraenoyl)-sn-glycero-3-phosphoethanolamine. The enzyme catalyses 1-octadecanoyl-2-(5Z,8Z,11Z,14Z-eicosatetraenoyl)-sn-glycero-3-phospho-(1D-myo-inositol) + O2 = 1-octadecanoyl-2-(15-hydroperoxy-5Z,8Z,11Z,13E-eicosatetraenoyl)-sn-glycero-3-phospho-(1D-myo-inositol). It catalyses the reaction (8Z,11Z,14Z)-eicosatrienoate + O2 = 15-hydroperoxy-(8Z,11Z,13E)-eicosatrienoate. It carries out the reaction (7S)-hydroperoxy-(4Z,8E,10Z,13Z,16Z,19Z)-docosahexaenoate + O2 = (7S,17S)-dihydroperoxy-(4Z,8E,10Z,13Z,15E,19Z)-docosahexaenoate. The catalysed reaction is (5Z,8Z,11Z,14Z)-eicosatetraenoate + O2 = 15-hydroperoxy-(5Z,8Z,11Z,13E)-eicosatetraenoate. The protein operates within lipid metabolism; hydroperoxy eicosatetraenoic acid biosynthesis. In terms of biological role, non-heme iron-containing dioxygenase that catalyzes the stereo-specific peroxidation of free and esterified polyunsaturated fatty acids (PUFAs) generating a spectrum of bioactive lipid mediators. It inserts peroxyl groups at C15 of arachidonate ((5Z,8Z,11Z,14Z)-eicosatetraenoate) producing (15S)-hydroperoxyeicosatetraenoate/(15S)-HPETE. Also peroxidizes linoleate ((9Z,12Z)-octadecadienoate) to 13-hydroperoxyoctadecadienoate/13-HPODE. Oxygenates arachidonyl derivatives such as 2-arachidonoylglycerol (2-AG) leading to the production and extracellular release of 15-hydroxyeicosatetraenoyl glycerol (15-HETE-G) that acts as a peroxisome proliferator-activated receptor alpha agonist. Has the ability to efficiently class-switch ALOX5 pro-inflammatory mediators into anti-inflammatory intermediates. Participates in the sequential oxidations of DHA ((4Z,7Z,10Z,13Z,16Z,19Z)-docosahexaenoate) to generate specialized pro-resolving mediators (SPMs) resolvin D5 ((7S,17S)-diHPDHA), which can actively down-regulate the immune response and have anti-aggregation properties with platelets. In addition to free PUFAs hydrolyzed from phospholipids, it directly oxidizes PUFAs esterified to membrane-bound phospholipids. Has no detectable 8S-lipoxygenase activity on arachidonate but reacts with (8S)-HPETE to produce (8S,15S)-diHPETE. May regulate progression through the cell cycle and cell proliferation. May also regulate cytokine secretion by macrophages and therefore play a role in the immune response. May also regulate macrophage differentiation into proatherogenic foam cells. Its function is as follows. Does not convert arachidonic acid to 15S-hydroperoxyeicosatetraenoic acid/(15S)-HPETE. In Homo sapiens (Human), this protein is Polyunsaturated fatty acid lipoxygenase ALOX15B.